We begin with the raw amino-acid sequence, 198 residues long: MQQDIVNDHQEEAQGWKWEQIKEIIESGELARLKRSRQMTDKYHEHKKRTAGLDMNQYVLQKLGWSLDEPQLENAAAKAFSSSTLYAVRANDFPYNFEPGVVHLVLWSKVALPVHSPDKAVREAARARMNAFLQAQPLLRPLLSSGHVAWFVNYPELQSVARIFHAHVLLFFPRERYSAEQVKTTVDDILSHGFEPLA.

It is found in the cytoplasm. This is an uncharacterized protein from Saccharomyces cerevisiae (strain ATCC 204508 / S288c) (Baker's yeast).